A 574-amino-acid polypeptide reads, in one-letter code: Septation ring formation regulator EzrA (574 aa).

At 1-7 (MSSGIIL) the chain is on the extracellular side. Residues 8–26 (LIVAIVLLVIIAYLVGVII) form a helical membrane-spanning segment. Over 27 to 574 (RKRNDSLITS…YEKTREHIRF (548 aa)) the chain is Cytoplasmic. 3 coiled-coil regions span residues 102–141 (NFIR…EEKN), 274–350 (ELVT…ETES), and 459–520 (QLEA…SFEA).

This sequence belongs to the EzrA family.

It is found in the cell membrane. In terms of biological role, negative regulator of FtsZ ring formation; modulates the frequency and position of FtsZ ring formation. Inhibits FtsZ ring formation at polar sites. Interacts either with FtsZ or with one of its binding partners to promote depolymerization. The sequence is that of Septation ring formation regulator EzrA from Streptococcus pyogenes serotype M3 (strain SSI-1).